The following is a 202-amino-acid chain: Imidazoleglycerol-phosphate dehydratase (202 aa).

This sequence belongs to the imidazoleglycerol-phosphate dehydratase family.

It is found in the cytoplasm. The catalysed reaction is D-erythro-1-(imidazol-4-yl)glycerol 3-phosphate = 3-(imidazol-4-yl)-2-oxopropyl phosphate + H2O. It participates in amino-acid biosynthesis; L-histidine biosynthesis; L-histidine from 5-phospho-alpha-D-ribose 1-diphosphate: step 6/9. The polypeptide is Imidazoleglycerol-phosphate dehydratase (Sinorhizobium medicae (strain WSM419) (Ensifer medicae)).